The sequence spans 396 residues: Small ribosomal subunit protein uS9m (396 aa).

An N6-acetyllysine modification is found at lysine 287. The segment at 374 to 396 (PRVRERKKPGQEGARRKFTWKKR) is disordered.

It belongs to the universal ribosomal protein uS9 family. Component of the mitochondrial small ribosomal subunit (mt-SSU). Mature mammalian 55S mitochondrial ribosomes consist of a small (28S) and a large (39S) subunit. The 28S small subunit contains a 12S ribosomal RNA (12S mt-rRNA) and 30 different proteins. The 39S large subunit contains a 16S rRNA (16S mt-rRNA), a copy of mitochondrial valine transfer RNA (mt-tRNA(Val)), which plays an integral structural role, and 52 different proteins.

It localises to the mitochondrion. The polypeptide is Small ribosomal subunit protein uS9m (MRPS9) (Homo sapiens (Human)).